The chain runs to 584 residues: UvrABC system protein C (584 aa).

A GIY-YIG domain is found at 12–89; sequence NKPGCYLFLN…IKKYRPKYNV (78 aa). A UVR domain is found at 194-229; it reads NQVKQTLVKQMQKASDNLQFEQAKRIKDQITSLDFI.

This sequence belongs to the UvrC family. Interacts with UvrB in an incision complex.

The protein localises to the cytoplasm. In terms of biological role, the UvrABC repair system catalyzes the recognition and processing of DNA lesions. UvrC both incises the 5' and 3' sides of the lesion. The N-terminal half is responsible for the 3' incision and the C-terminal half is responsible for the 5' incision. This chain is UvrABC system protein C, found in Mycoplasma capricolum subsp. capricolum (strain California kid / ATCC 27343 / NCTC 10154).